The following is a 274-amino-acid chain: Thiamine kinase (274 aa).

The protein belongs to the thiamine kinase family.

The catalysed reaction is thiamine + ATP = thiamine phosphate + ADP + H(+). It functions in the pathway cofactor biosynthesis; thiamine diphosphate biosynthesis; thiamine phosphate from thiamine: step 1/1. Functionally, catalyzes the ATP-dependent phosphorylation of thiamine to thiamine phosphate. Is involved in thiamine salvage. This chain is Thiamine kinase, found in Shigella boydii serotype 4 (strain Sb227).